A 181-amino-acid polypeptide reads, in one-letter code: Inner membrane-spanning protein YciB (181 aa).

5 helical membrane passes run 3-23, 54-74, 81-101, 119-139, and 149-169; these read LLFD…FGIY, SLAI…PWFI, IYWL…KPLI, LNLA…YVAY, and FKLF…AFYL.

The protein belongs to the YciB family.

Its subcellular location is the cell inner membrane. In terms of biological role, plays a role in cell envelope biogenesis, maintenance of cell envelope integrity and membrane homeostasis. This is Inner membrane-spanning protein YciB from Legionella pneumophila subsp. pneumophila (strain Philadelphia 1 / ATCC 33152 / DSM 7513).